The sequence spans 118 residues: Large ribosomal subunit protein bL20 (118 aa).

The protein belongs to the bacterial ribosomal protein bL20 family.

Functionally, binds directly to 23S ribosomal RNA and is necessary for the in vitro assembly process of the 50S ribosomal subunit. It is not involved in the protein synthesizing functions of that subunit. This Shigella dysenteriae serotype 1 (strain Sd197) protein is Large ribosomal subunit protein bL20.